We begin with the raw amino-acid sequence, 453 residues long: Serine--tRNA ligase (453 aa).

249–251 (TSE) contacts L-serine. Residues 280–282 (RKE) and Val-296 contribute to the ATP site. Glu-303 serves as a coordination point for L-serine. 367–370 (EMVS) is an ATP binding site. Thr-404 contributes to the L-serine binding site.

It belongs to the class-II aminoacyl-tRNA synthetase family. Type-1 seryl-tRNA synthetase subfamily. As to quaternary structure, homodimer. The tRNA molecule binds across the dimer.

The protein resides in the cytoplasm. It catalyses the reaction tRNA(Ser) + L-serine + ATP = L-seryl-tRNA(Ser) + AMP + diphosphate + H(+). The catalysed reaction is tRNA(Sec) + L-serine + ATP = L-seryl-tRNA(Sec) + AMP + diphosphate + H(+). The protein operates within aminoacyl-tRNA biosynthesis; selenocysteinyl-tRNA(Sec) biosynthesis; L-seryl-tRNA(Sec) from L-serine and tRNA(Sec): step 1/1. In terms of biological role, catalyzes the attachment of serine to tRNA(Ser). Is also able to aminoacylate tRNA(Sec) with serine, to form the misacylated tRNA L-seryl-tRNA(Sec), which will be further converted into selenocysteinyl-tRNA(Sec). The sequence is that of Serine--tRNA ligase from Archaeoglobus fulgidus (strain ATCC 49558 / DSM 4304 / JCM 9628 / NBRC 100126 / VC-16).